Consider the following 146-residue polypeptide: Large ribosomal subunit protein uL15 (146 aa).

Basic and acidic residues predominate over residues M1–P10. Residues M1–A41 are disordered.

This sequence belongs to the universal ribosomal protein uL15 family. Part of the 50S ribosomal subunit.

Its function is as follows. Binds to the 23S rRNA. In Mycobacterium bovis (strain BCG / Pasteur 1173P2), this protein is Large ribosomal subunit protein uL15.